The primary structure comprises 1018 residues: Probable ubiquitination network signaling protein acrB (1018 aa).

Positions 1–21 (MPRSSATARKNQSNRNENGAS) are enriched in polar residues. The disordered stretch occupies residues 1–138 (MPRSSATARK…KSATGAKRST (138 aa)). Over residues 45–74 (PGSVSSSQVDLPSSRSTSDSAIAPAAAASS) the composition is skewed to low complexity. The span at 82–93 (SSKEDCNGREKL) shows a compositional bias: basic and acidic residues. 3 consecutive transmembrane segments (helical) span residues 162 to 182 (IAIL…VQFL), 217 to 237 (TMIA…WTWA), and 258 to 278 (SGKN…LHLI). Disordered stretches follow at residues 342-371 (ARRS…GSQT), 581-602 (EQFS…PTTT), and 962-1018 (GEKR…GKPN). A coiled-coil region spans residues 601 to 788 (TTLKNSIVNA…EQDQAKLEAN (188 aa)). Residues 991–1007 (RGSGSGSNGSGGSGSGS) show a composition bias toward gly residues.

Belongs to the acrB family.

It is found in the membrane. Functionally, component of the regulatory network controlling carbon source utilization through ubiquitination and deubiquitination involving creA, creB, creC, creD and acrB. Involved in resistance to acriflavine, and required for normal growth on a range of sole carbon sources, including fructose, cellobiose, raffinose, and starch, and reduced utilization of amino acids, including GABA and beta-alanine, as sole carbon and nitrogen sources. The protein is Probable ubiquitination network signaling protein acrB (acrB) of Aspergillus clavatus (strain ATCC 1007 / CBS 513.65 / DSM 816 / NCTC 3887 / NRRL 1 / QM 1276 / 107).